The chain runs to 714 residues: Interferon-induced GTP-binding protein Mx2 (714 aa).

Positions Met1–Leu89 are disordered. Composition is skewed to polar residues over residues Asn61–Pro70 and Gln79–Asn88. One can recognise a Dynamin-type G domain in the interval Asp115–Pro386. Positions Gly125–Ser132 are G1 motif. Gly125–Ser132 is a GTP binding site. The tract at residues Ile150–Arg152 is G2 motif. Residues Asp224 to Gly227 form a G3 motif region. Residues Asp224–Ile228 and Thr293–Asp296 each bind GTP. The segment at Thr293–Asp296 is G4 motif. Positions Lys325–Gly328 are G5 motif. In terms of domain architecture, GED spans Ile622–Ser713.

This sequence belongs to the TRAFAC class dynamin-like GTPase superfamily. Dynamin/Fzo/YdjA family.

Its subcellular location is the cytoplasm. It is found in the nucleus. In terms of biological role, interferon-induced dynamin-like GTPase with antiviral activity. This is Interferon-induced GTP-binding protein Mx2 (MX2) from Ovis aries (Sheep).